The sequence spans 159 residues: Ubiquitin-like protein ATG12 (159 aa).

The interval 1–40 (MASPQPPFGGGSNSNSNTASPSNNLSPTASPLLEGRDSPN) is disordered. Residues 13-27 (NSNSNTASPSNNLSP) show a composition bias toward low complexity. A Glycyl lysine isopeptide (Gly-Lys) (interchain with K-218 in ATG5) cross-link involves residue G159.

It belongs to the ATG12 family. Forms a conjugate with ATG5. Forms a thioester bond with the 'Cys-116' of ATG10. Interacts with the ATG7 C-terminal 40 amino acids domain. The ATG12-ATG5 conjugate forms a complex with several units of ATG16. The ATG12-ATG5 conjugate also associates with ATG3.

Its subcellular location is the preautophagosomal structure membrane. It localises to the cytoplasm. In terms of biological role, ubiquitin-like protein involved in cytoplasm to vacuole transport (Cvt), autophagy vesicles formation, mitophagy, and nucleophagy. Conjugation with ATG5 through a ubiquitin-like conjugating system involving also ATG7 as an E1-like activating enzyme and ATG10 as an E2-like conjugating enzyme, is essential for its function. The ATG12-ATG5 conjugate acts as an E3-like enzyme which is required for lipidation of ATG8 and ATG8 association to the vesicle membranes. ATG12-ATG5 rearranges the ATG3 catalytic center and enhances its E2 activity. Plays a role in sexual development and perithecia formation. The chain is Ubiquitin-like protein ATG12 from Sordaria macrospora (strain ATCC MYA-333 / DSM 997 / K(L3346) / K-hell).